The chain runs to 414 residues: Zinc metalloproteinase nas-26 (414 aa).

Residues Met-1–Ala-20 form the signal peptide. Positions Ala-21 to Arg-61 are excised as a propeptide. A glycan (N-linked (GlcNAc...) asparagine) is linked at Asn-24. Residues Glu-62–Pro-264 enclose the Peptidase M12A domain. 6 cysteine pairs are disulfide-bonded: Cys-103-Cys-263, Cys-126-Cys-146, Cys-267-Cys-286, Cys-289-Cys-300, Cys-308-Cys-331, and Cys-358-Cys-378. Zn(2+) is bound at residue His-154. Residue Glu-155 is part of the active site. Zn(2+) contacts are provided by His-158 and His-164. An EGF-like domain is found at Ala-251–Pro-307. The CUB domain maps to Cys-308 to Ala-414.

The cofactor is Zn(2+).

The protein localises to the secreted. Its function is as follows. Metalloprotease. This is Zinc metalloproteinase nas-26 (toh-1) from Caenorhabditis elegans.